Here is a 515-residue protein sequence, read N- to C-terminus: Slowpoke-binding protein (515 aa).

Residues 1–31 (MFKFNKAAQQQRIDNRNSAVTGHDPFVRPPV) are disordered. Positions 7 to 20 (AAQQQRIDNRNSAV) are enriched in polar residues. A phosphoserine mark is found at S54 and S79. A compositionally biased stretch (polar residues) spans 73–82 (SSNRSASSEQ). The interval 73 to 94 (SSNRSASSEQDNSDLSEHSEKS) is disordered. The interval 191 to 203 (NWFLVTDASVRTD) is interaction with Slo. The segment at 483-503 (SLSEANSPCTPPSTPHDRRTG) is disordered.

As to quaternary structure, interacts specifically with Slo; which activates Slo activity. Interacts with 14-3-3-zeta when phosphorylated. Forms a heterotetrameric complex containing phosphorylated Slob, Slo and 14-3-3-zeta, which represses Slo activity due to the indirect interaction between Slo and 14-3-3-zeta. Post-translationally, phosphorylated. Phosphorylation of Ser-54 and Ser-79 is required for the interaction with 14-3-3-zeta but not with that of Slo. In terms of tissue distribution, expressed in head. In larval brain, it is expressed in the mushroom body. Also expressed in larval muscles.

Its subcellular location is the cytoplasm. Regulator of calcium-activated channel Slo. Increases or decreases the voltage sensitivity of Slo, depending on the absence or presence of 14-3-3-zeta in the complex, respectively. This chain is Slowpoke-binding protein (Slob), found in Drosophila melanogaster (Fruit fly).